The following is a 242-amino-acid chain: MDKVFELKNVSYFYTPKVPALIDISFDVKLKEKLFILGANGSGKSTLLKLMDGLIYPHEGQIRFFGKVIGDKRTFDEYEFRRRVGFVFQDSDVQLFNTTVFDEIAFAPLQMGVKKEEVEKLVNEILISFGIEKLKDRPPHRLSGGEKKKVALASIIVINPDVLLLDEPTNGLDPRSKKWLLSKLEELNQKGATLVIATHDLEMAKKFSDRIIILNEEHKIETIGSPEEILNDEKLLLKANLI.

The ABC transporter domain maps to 5–242 (FELKNVSYFY…EKLLLKANLI (238 aa)). 38-45 (GANGSGKS) is a binding site for ATP.

It belongs to the ABC transporter superfamily.

It localises to the cell membrane. Probably part of an ABC transporter complex. Responsible for energy coupling to the transport system. This is Putative ABC transporter ATP-binding protein TTE0246 from Caldanaerobacter subterraneus subsp. tengcongensis (strain DSM 15242 / JCM 11007 / NBRC 100824 / MB4) (Thermoanaerobacter tengcongensis).